Reading from the N-terminus, the 860-residue chain is Probable beta-glucosidase A (860 aa).

The N-terminal stretch at 1 to 19 (MRFTSIEAVALTAVSLASA) is a signal peptide. N-linked (GlcNAc...) asparagine glycans are attached at residues N61, N211, and N252. D280 is a catalytic residue. 11 N-linked (GlcNAc...) asparagine glycosylation sites follow: N315, N322, N354, N387, N442, N523, N542, N564, N658, N690, and N712.

The protein belongs to the glycosyl hydrolase 3 family.

Its subcellular location is the secreted. The enzyme catalyses Hydrolysis of terminal, non-reducing beta-D-glucosyl residues with release of beta-D-glucose.. Its pathway is glycan metabolism; cellulose degradation. Functionally, beta-glucosidases are one of a number of cellulolytic enzymes involved in the degradation of cellulosic biomass. Catalyzes the last step releasing glucose from the inhibitory cellobiose. The sequence is that of Probable beta-glucosidase A (bglA) from Aspergillus niger (strain ATCC MYA-4892 / CBS 513.88 / FGSC A1513).